Reading from the N-terminus, the 160-residue chain is NADH-quinone oxidoreductase subunit B (160 aa).

Residues Cys37, Cys38, Cys102, and Cys132 each coordinate [4Fe-4S] cluster.

This sequence belongs to the complex I 20 kDa subunit family. In terms of assembly, NDH-1 is composed of 14 different subunits. Subunits NuoB, C, D, E, F, and G constitute the peripheral sector of the complex. The cofactor is [4Fe-4S] cluster.

It localises to the cell inner membrane. It catalyses the reaction a quinone + NADH + 5 H(+)(in) = a quinol + NAD(+) + 4 H(+)(out). Functionally, NDH-1 shuttles electrons from NADH, via FMN and iron-sulfur (Fe-S) centers, to quinones in the respiratory chain. Couples the redox reaction to proton translocation (for every two electrons transferred, four hydrogen ions are translocated across the cytoplasmic membrane), and thus conserves the redox energy in a proton gradient. The sequence is that of NADH-quinone oxidoreductase subunit B from Neisseria gonorrhoeae (strain ATCC 700825 / FA 1090).